The primary structure comprises 366 residues: MGMSQPGVLLSLLLVLLPQTWGAEPRLPLMYHLAAVSDLSTGLPSFWATGWLGAQQYLTYNNLRQEADPCGAWIWENQVSWYWEKETTDLKSKEQLFLEAIRTLENQINGTFTLQGLLGCELAPDNSSLPTAVFALNGEEFMRFNPRTGNWSGEWPETDIVGNLWMKQPEAARKESEFLLTSCPERLLGHLERGRQNLEWKEPPSMRLKARPGNSGSSVLTCAAFSFYPPELKFRFLRNGLASGSGNCSTGPNGDGSFHAWSLLEVKRGDEHHYQCQVEHEGLAQPLTVDLDSPARSSVPVVGIILGLLLVVVAIAGGVLLWNRMRSGLPAPWLSLSGDDSGDLLPGGNLPPEAEPQGVNAFPATS.

Residues 1–22 form the signal peptide; it reads MGMSQPGVLLSLLLVLLPQTWG. The alpha-1 stretch occupies residues 23–111; sequence AEPRLPLMYH…RTLENQINGT (89 aa). At 23–298 the chain is on the extracellular side; that stretch reads AEPRLPLMYH…VDLDSPARSS (276 aa). Residues Asn109, Asn126, Asn150, and Asn247 are each glycosylated (N-linked (GlcNAc...) asparagine). Positions 112-201 are alpha-2; sequence FTLQGLLGCE…ERGRQNLEWK (90 aa). Disulfide bonds link Cys120/Cys183 and Cys222/Cys276. The alpha-3 stretch occupies residues 202-291; it reads EPPSMRLKAR…GLAQPLTVDL (90 aa). Positions 203 to 290 constitute an Ig-like C1-type domain; the sequence is PPSMRLKARP…EGLAQPLTVD (88 aa). Positions 293 to 298 are connecting peptide; it reads SPARSS. The chain crosses the membrane as a helical span at residues 299 to 322; that stretch reads VPVVGIILGLLLVVVAIAGGVLLW. The Cytoplasmic portion of the chain corresponds to 323–366; that stretch reads NRMRSGLPAPWLSLSGDDSGDLLPGGNLPPEAEPQGVNAFPATS. Position 335 is a phosphoserine (Ser335). The disordered stretch occupies residues 344-366; it reads LLPGGNLPPEAEPQGVNAFPATS.

This sequence belongs to the immunoglobulin superfamily. FcRn complex consists of two subunits: p51, and p14 which is equivalent to beta-2-microglobulin. It forms an MHC class I-like heterodimer. Interacts with albumin/ALB; this interaction regulates ALB homeostasis. Intestinal epithelium.

It localises to the cell membrane. Its subcellular location is the endosome membrane. Its function is as follows. Cell surface receptor that transfers passive humoral immunity from the mother to the newborn. Binds to the Fc region of monomeric immunoglobulin gamma and mediates its selective uptake from milk. IgG in the milk is bound at the apical surface of the intestinal epithelium. The resultant FcRn-IgG complexes are transcytosed across the intestinal epithelium and IgG is released from FcRn into blood or tissue fluids. Throughout life, contributes to effective humoral immunity by recycling IgG and extending its half-life in the circulation. Mechanistically, monomeric IgG binding to FcRn in acidic endosomes of endothelial and hematopoietic cells recycles IgG to the cell surface where it is released into the circulation. In addition of IgG, regulates homeostasis of the other most abundant circulating protein albumin/ALB. This is IgG receptor FcRn large subunit p51 (Fcgrt) from Rattus norvegicus (Rat).